We begin with the raw amino-acid sequence, 231 residues long: F-box protein SKIP8 (231 aa).

Residues 1 to 24 (MPSTPLANGGTPPMGGGERTTVTT) are disordered. Residues 34–80 (VSMMEQLVPEITTHALSYLDYPSLCRLSMTNSLMRKAANDDNAWKAL) form the F-box domain.

Part of a SCF (ASK-cullin-F-box) protein ligase complex. Interacts with SKP1A/ASK1.

The protein operates within protein modification; protein ubiquitination. Component of SCF(ASK-cullin-F-box) E3 ubiquitin ligase complexes, which may mediate the ubiquitination and subsequent proteasomal degradation of target proteins. This Arabidopsis thaliana (Mouse-ear cress) protein is F-box protein SKIP8 (SKIP8).